Here is a 404-residue protein sequence, read N- to C-terminus: Inosine-5'-monophosphate dehydrogenase (404 aa).

NAD(+)-binding positions include D172 and G222–G224. K(+) is bound by residues G224 and G226. S227 lines the IMP pocket. Residue C229 coordinates K(+). The active-site Thioimidate intermediate is the C229. IMP contacts are provided by residues D262–G264, G285–N286, and Y309–G313. Residue R325 is the Proton acceptor of the active site. E340 contacts IMP. 3 residues coordinate K(+): E394, S395, and H396.

This sequence belongs to the IMPDH/GMPR family. Homotetramer. It depends on K(+) as a cofactor.

It carries out the reaction IMP + NAD(+) + H2O = XMP + NADH + H(+). Its pathway is purine metabolism; XMP biosynthesis via de novo pathway; XMP from IMP: step 1/1. With respect to regulation, mycophenolic acid (MPA) is a non-competitive inhibitor that prevents formation of the closed enzyme conformation by binding to the same site as the amobile flap. In contrast, mizoribine monophosphate (MZP) is a competitive inhibitor that induces the closed conformation. MPA is a potent inhibitor of mammalian IMPDHs but a poor inhibitor of the bacterial enzymes. MZP is a more potent inhibitor of bacterial IMPDH. Its function is as follows. Catalyzes the conversion of inosine 5'-phosphate (IMP) to xanthosine 5'-phosphate (XMP), the first committed and rate-limiting step in the de novo synthesis of guanine nucleotides, and therefore plays an important role in the regulation of cell growth. Essential for mouse infection by tick bite and critical for the survival in environments that appear to lack sufficient amounts of guanine, guanosine, and/or deoxyguanosine to support spirochete growth, such as mammalian host tissues. This is Inosine-5'-monophosphate dehydrogenase from Borreliella burgdorferi (strain ATCC 35210 / DSM 4680 / CIP 102532 / B31) (Borrelia burgdorferi).